The chain runs to 326 residues: Probable oxidoreductase patJ (326 aa).

Residues 287 to 326 are disordered; sequence HGVQPGSVNGSNGHSTGVESKLEQLGSRAQRRVVIDDAGK. Residues 292-304 are compositionally biased toward polar residues; the sequence is GSVNGSNGHSTGV.

Belongs to the oxidoreductase OpS7 family.

Its subcellular location is the vacuole lumen. The protein resides in the cytoplasmic vesicle lumen. The protein operates within mycotoxin biosynthesis; patulin biosynthesis. Probable oxidoreductase; part of the gene cluster that mediates the biosynthesis of patulin, an acetate-derived tetraketide mycotoxin produced by several fungal species that shows antimicrobial properties against several bacteria. PatJ acts with patO in the vacuole to convert gentisyl alcohol to isoepoxydon. The pathway begins with the synthesis of 6-methylsalicylic acid by the polyketide synthase (PKS) patK via condensation of acetate and malonate units. The 6-methylsalicylic acid decarboxylase patG then catalyzes the decarboxylation of 6-methylsalicylic acid to yield m-cresol (also known as 3-methylphenol). These first reactions occur in the cytosol. The intermediate m-cresol is then transported into the endoplasmic reticulum where the cytochrome P450 monooxygenase patH converts it to m-hydroxybenzyl alcohol, which is further converted to gentisyl alcohol by the cytochrome P450 monooxygenase patI. The oxidoreductases patJ and patO further convert gentisyl alcohol to isoepoxydon in the vacuole. PatN catalyzes then the transformation of isoepoxydon into phyllostine. The cluster protein patF is responsible for the conversion from phyllostine to neopatulin whereas the alcohol dehydrogenase patD converts neopatulin to E-ascladiol. The steps between isoepoxydon and E-ascladiol occur in the cytosol, and E-ascladiol is probably secreted to the extracellular space by one of the cluster-specific transporters patC or patM. Finally, the secreted patulin synthase patE catalyzes the conversion of E-ascladiol to patulin. The chain is Probable oxidoreductase patJ from Penicillium expansum (Blue mold rot fungus).